Reading from the N-terminus, the 416-residue chain is UDP-N-acetylglucosamine 1-carboxyvinyltransferase (416 aa).

Phosphoenolpyruvate is bound at residue 22–23 (KN). Position 91 (R91) interacts with UDP-N-acetyl-alpha-D-glucosamine. C115 serves as the catalytic Proton donor. C115 carries the 2-(S-cysteinyl)pyruvic acid O-phosphothioketal modification. UDP-N-acetyl-alpha-D-glucosamine-binding positions include 120-124 (RPIDL), D303, and I325.

This sequence belongs to the EPSP synthase family. MurA subfamily.

It localises to the cytoplasm. It catalyses the reaction phosphoenolpyruvate + UDP-N-acetyl-alpha-D-glucosamine = UDP-N-acetyl-3-O-(1-carboxyvinyl)-alpha-D-glucosamine + phosphate. Its pathway is cell wall biogenesis; peptidoglycan biosynthesis. Its function is as follows. Cell wall formation. Adds enolpyruvyl to UDP-N-acetylglucosamine. This is UDP-N-acetylglucosamine 1-carboxyvinyltransferase from Lawsonia intracellularis (strain PHE/MN1-00).